The chain runs to 115 residues: Large ribosomal subunit protein bL20 (115 aa).

This sequence belongs to the bacterial ribosomal protein bL20 family.

In terms of biological role, binds directly to 23S ribosomal RNA and is necessary for the in vitro assembly process of the 50S ribosomal subunit. It is not involved in the protein synthesizing functions of that subunit. In Prochlorococcus marinus (strain MIT 9313), this protein is Large ribosomal subunit protein bL20.